Here is a 2725-residue protein sequence, read N- to C-terminus: Teneurin-1 (2725 aa).

Residues 1 to 48 (MEQTDCKPYQPLPKVKHEMDLAYTSSSDESEDGRKPRQSYNSRETLHE) form a disordered region. Residues 1–318 (MEQTDCKPYQ…KPYRCCNWKC (318 aa)) form the Teneurin N-terminal domain. The Cytoplasmic portion of the chain corresponds to 1 to 324 (MEQTDCKPYQ…NWKCTALSAT (324 aa)). The short motif at 62–65 (RKRK) is the Nuclear localization signal (NLS) element. At Ser105 the chain carries Phosphoserine. Position 109 is a phosphothreonine (Thr109). A Phosphoserine modification is found at Ser116. Positions 174–189 (AGSTQDVQSSPHNQFT) are enriched in polar residues. A disordered region spans residues 174-241 (AGSTQDVQSS…PAPPTSTQDS (68 aa)). Positions 192–201 (PLPPPPPPPH) are enriched in pro residues. The Required for interaction with SORBS1 (Ten-1 ICD form) motif lies at 290-297 (PPPRPLPR). A helical transmembrane segment spans residues 325–345 (AITVTLALLLAYVIAVHLFGL). Over 346-2725 (TWQLQPVEGE…FMRQSEIGRR (2380 aa)) the chain is Extracellular. A glycan (N-linked (GlcNAc...) asparagine) is linked at Asn433. 8 consecutive EGF-like domains span residues 528–559 (IMDD…PDCA), 560–591 (RDSC…ECDV), 592–624 (PEEQ…EICE), 625–657 (EEDC…NCET), 658–691 (PLPV…SDCS), 692–721 (TELC…GPTC), 722–753 (EERS…DHCT), and 761–796 (VRDG…TGCN). Cystine bridges form between Cys532/Cys542, Cys536/Cys547, Cys549/Cys558, Cys567/Cys578, Cys580/Cys589, Cys596/Cys607, Cys601/Cys612, Cys614/Cys623, Cys628/Cys639, Cys633/Cys644, Cys646/Cys655, Cys666/Cys679, Cys681/Cys690, Cys695/Cys705, Cys699/Cys710, Cys712/Cys721, Cys726/Cys736, Cys730/Cys741, Cys743/Cys752, Cys765/Cys775, Cys769/Cys784, and Cys786/Cys795. Residues Asn905 and Asn1084 are each glycosylated (N-linked (GlcNAc...) asparagine). NHL repeat units lie at residues 1194–1219 (LFAP…VRRI), 1292–1336 (SHCG…NAVI), 1351–1402 (LSCD…IAGR), 1414–1458 (FLVS…VTTN), and 1481–1524 (CFSG…ISRN). The YD 1 repeat unit spans residues 1534-1553 (YEIASPADQELYQFTVNGTH). N-linked (GlcNAc...) asparagine glycosylation is found at Asn1550 and Asn1567. 4 YD repeats span residues 1570–1590 (YNSE…VHIR), 1608–1632 (YWLT…ALMT), 1633–1654 (YPGN…TVYE), and 1655–1675 (YDPE…SSFH). N-linked (GlcNAc...) asparagine glycans are attached at residues Asn1663, Asn1699, Asn1757, Asn1781, and Asn1842. YD repeat units follow at residues 1845 to 1864 (YSPS…EKME), 1865 to 1885 (YDQS…WSYT), 1886 to 1904 (YLEK…YIFE), 1905 to 1925 (YDQP…HSLQ), 1933 to 1949 (YRNI…FIQD), 1950 to 1969 (YSRD…RRVL), 1970 to 1989 (YKYT…TQVT), 1992 to 2012 (YEES…FICT), 2015 to 2035 (YRQT…EGLV), 2085 to 2105 (YDLN…FSAN), and 2113 to 2133 (YEIL…VGRM). Asn2145 carries N-linked (GlcNAc...) asparagine glycosylation. YD repeat units follow at residues 2153 to 2173 (YDAD…WRYS), 2174 to 2194 (YDLN…LTPL), 2196 to 2216 (YDLR…DEDG), 2228 to 2248 (YNSN…TVQY), and 2250 to 2270 (YDGL…LQFF). The N-linked (GlcNAc...) asparagine glycan is linked to Asn2285. YD repeat units lie at residues 2296–2313 (YDLQ…GEEY) and 2314–2337 (YVAC…IKEI). Ser2580 is subject to Phosphoserine. Asn2602 is a glycosylation site (N-linked (GlcNAc...) asparagine).

The protein belongs to the tenascin family. Teneurin subfamily. In terms of assembly, homodimer; disulfide-linked. Heterodimer with either TENM2 or TENM3. May also form heterodimer with TENM4. Ten-1 ICD interacts with SORBS1 (via third SH3 domain). Interacts with MBD1. Ten-1 ICD interacts with HINT1. Derives from the plasma membrane form by proteolytic processing. Further proteolytic cleavage may be generated. As to expression, expressed in fetal brain.

The protein resides in the cell membrane. It localises to the nucleus. The protein localises to the nucleus speckle. It is found in the nucleus matrix. Its subcellular location is the cytoplasm. The protein resides in the cytoskeleton. Involved in neural development, regulating the establishment of proper connectivity within the nervous system. May function as a cellular signal transducer. Functionally, plays a role in the regulation of neuroplasticity in the limbic system. Mediates a rapid reorganization of actin- and tubulin-based cytoskeleton elements with an increase in dendritic arborization and spine density formation of neurons in the hippocampus and amygdala. Induces BDNF transcription inhibition in neurons. Activates the mitogen-activated protein (MAP) kinase 2 (MEK2) and extracellular signal-regulated kinase (ERK) cascade. Also acts as a bioactive neuroprotective peptide on limbic neurons of the brain and regulates stress-induced behavior: attenuates alkalosis-associated necrotic cell death and the effects of corticotropin-releasing factor (CRF) on c-fos/FOS induction and on the reinstatement of cocaine seeking. In terms of biological role, induces gene transcription activation. In Homo sapiens (Human), this protein is Teneurin-1 (TENM1).